The sequence spans 340 residues: MLAFRKARRKLRMGTICSPNPSGTKTASEVCNADWMASLPAHLHNVPLSNLAIPGSHDSFSYWVDEKSPVGPDQTQAVIRLARISLVKKLMKKWSVTQNLTFREQLEAGIRYFDLRVSSKPGDTDQEIYFIHGLFGIKVWDGLMEIDAFLTQHPQEIIFLDFNHFYAMDESHHKCLVLRIQEAFGNKLCPACSVESMTLRSLWEKKYQVLIFYHCPFYKQYPFLWPGKKIPAPWANTTSVQKLILFLETTLSERAPRGAFHVSQAILTPRVKTIARGLVGGLKNTLVHRNLPAILDWVKTQKPGAMGVNIITSDFVDLIDFATTVIELNDLLEDRALTKC.

The 174-residue stretch at 42-215 (HLHNVPLSNL…KYQVLIFYHC (174 aa)) folds into the PI-PLC X-box domain. Catalysis depends on residues His57 and His132.

As to expression, expressed at highest levels in brain, followed by stomach and small intestine. Detected at low levels in kidney, ey, thymus and slkeletal muscle.

The protein resides in the nucleus. The enzyme catalyses a 1,2-diacyl-sn-glycero-3-phospho-(1D-myo-inositol) + H2O = 1D-myo-inositol 1-phosphate + a 1,2-diacyl-sn-glycerol + H(+). In terms of biological role, catalyzes the hydrolysis of inositol from phosphatidylinositol (1,2-diacyl-sn-glycero-3-phospho-(1D-myo-inositol), PI). Could also hydrolyze various multi-phosphorylated derivatives of PI, such as phosphatidylinositol-4,5 bisphosphate (PIP2), releasing inositol-1,4,5-trisphosphate (IP3) and the protein kinase C activator diacylglycerol (DAG), therefore mediating cell signaling. The polypeptide is PI-PLC X domain-containing protein 2 (Plcxd2) (Mus musculus (Mouse)).